The chain runs to 218 residues: MSDKQREAERQQSEDKAHSEAESAEAGQAPEAQAAEDGAESASGDSGDELTELQQALEEARARAEENWNECLRARAEMQNIQRRAQADVEKARKYAVEKIAGDLLGVKDSLEMGVKAAKEEGADPQKLLEGSELTLKMLSQVLERFNVQEIDPQGERFNPEHHEAVAAQPSHEHEPNTVLNVMQKGYALHDRVLRPAMVVVSQKAPEPPPSGSIDEQA.

Residues 1–21 (MSDKQREAERQQSEDKAHSEA) are compositionally biased toward basic and acidic residues. The tract at residues 1–66 (MSDKQREAER…LEEARARAEE (66 aa)) is disordered. The segment covering 24–36 (AEAGQAPEAQAAE) has biased composition (low complexity).

It belongs to the GrpE family. In terms of assembly, homodimer.

Its subcellular location is the cytoplasm. In terms of biological role, participates actively in the response to hyperosmotic and heat shock by preventing the aggregation of stress-denatured proteins, in association with DnaK and GrpE. It is the nucleotide exchange factor for DnaK and may function as a thermosensor. Unfolded proteins bind initially to DnaJ; upon interaction with the DnaJ-bound protein, DnaK hydrolyzes its bound ATP, resulting in the formation of a stable complex. GrpE releases ADP from DnaK; ATP binding to DnaK triggers the release of the substrate protein, thus completing the reaction cycle. Several rounds of ATP-dependent interactions between DnaJ, DnaK and GrpE are required for fully efficient folding. This chain is Protein GrpE, found in Alkalilimnicola ehrlichii (strain ATCC BAA-1101 / DSM 17681 / MLHE-1).